A 119-amino-acid polypeptide reads, in one-letter code: NADH-quinone oxidoreductase subunit A (119 aa).

3 consecutive transmembrane segments (helical) span residues 9-29 (VLLF…LGYV), 63-83 (LVAI…PWAV), and 88-108 (VGMA…VGFA).

The protein belongs to the complex I subunit 3 family. NDH-1 is composed of 14 different subunits. Subunits NuoA, H, J, K, L, M, N constitute the membrane sector of the complex.

The protein localises to the cell inner membrane. The catalysed reaction is a quinone + NADH + 5 H(+)(in) = a quinol + NAD(+) + 4 H(+)(out). NDH-1 shuttles electrons from NADH, via FMN and iron-sulfur (Fe-S) centers, to quinones in the respiratory chain. The immediate electron acceptor for the enzyme in this species is believed to be ubiquinone. Couples the redox reaction to proton translocation (for every two electrons transferred, four hydrogen ions are translocated across the cytoplasmic membrane), and thus conserves the redox energy in a proton gradient. This chain is NADH-quinone oxidoreductase subunit A, found in Verminephrobacter eiseniae (strain EF01-2).